Consider the following 185-residue polypeptide: MDLKVFDGQDKSELSMIEVAHAILAHHGKAMAFVDLTNEVQQYLGKSDEEIRERLAQFYTDLNVDGSFISLGDNTWGLRAWYPFESIDEATVGENEEDEEDDRPKKKRRKVNAFLADTDDDDDVIDYDNDDPEDEDLDTDDDADSEDDYDDDTDDFSDDDDDLDDGIEGQLSELHDEEDEDEDDE.

Residues 14–81 form the HTH HARE-type domain; that stretch reads LSMIEVAHAI…GDNTWGLRAW (68 aa). Positions 90–185 are disordered; the sequence is ATVGENEEDE…DEEDEDEDDE (96 aa). 2 stretches are compositionally biased toward acidic residues: residues 117 to 167 and 175 to 185; these read DTDD…DDGI and HDEEDEDEDDE.

Belongs to the RpoE family. As to quaternary structure, RNAP is composed of a core of 2 alpha, a beta and a beta' subunits. The core is associated with a delta subunit and one of several sigma factors.

Functionally, participates in both the initiation and recycling phases of transcription. In the presence of the delta subunit, RNAP displays an increased specificity of transcription, a decreased affinity for nucleic acids, and an increased efficiency of RNA synthesis because of enhanced recycling. In Limosilactobacillus reuteri (strain DSM 20016) (Lactobacillus reuteri), this protein is Probable DNA-directed RNA polymerase subunit delta.